Consider the following 312-residue polypeptide: Lipid-translocating exporter-like protein RTA1 (312 aa).

Positions 1 to 21 (MSPESKKITAHGSTSMPLSRT) are disordered. The span at 11 to 21 (HGSTSMPLSRT) shows a compositional bias: polar residues. 6 consecutive transmembrane segments (helical) span residues 29–49 (IPLT…FFLA), 61–81 (LSTM…YFIC), 103–123 (FITF…LLAG), 142–162 (AMIT…SFHV), 183–203 (FMMV…RSAY), and 223–243 (SLML…ILPI). Asn-258 and Asn-304 each carry an N-linked (GlcNAc...) asparagine glycan.

Belongs to the lipid-translocating exporter (LTE) (TC 9.A.26.1) family.

The protein resides in the membrane. It functions in the pathway siderophore biosynthesis. Lipid-translocating exporter-like protein; part of the gene cluster that mediates the biosynthesis of hydroxamate-containing siderophores that play a critical role in virulence via intracellular iron acquisition during macrophage infection. The protein is Lipid-translocating exporter-like protein RTA1 of Ajellomyces capsulatus (Darling's disease fungus).